Here is a 700-residue protein sequence, read N- to C-terminus: Ribonucleoside-diphosphate reductase subunit alpha (700 aa).

Substrate-binding positions include Thr153, 169–170 (SC), Gly198, 380–384 (NLCSE), and 580–584 (PTGSI). A disulfide bridge connects residues Cys170 and Cys409. Catalysis depends on Asn380, which acts as the Proton acceptor. The active-site Cysteine radical intermediate is Cys382. The Proton acceptor role is filled by Glu384.

This sequence belongs to the ribonucleoside diphosphate reductase large chain family. Tetramer of two alpha and two beta subunits.

It carries out the reaction a 2'-deoxyribonucleoside 5'-diphosphate + [thioredoxin]-disulfide + H2O = a ribonucleoside 5'-diphosphate + [thioredoxin]-dithiol. Its activity is regulated as follows. Under complex allosteric control mediated by deoxynucleoside triphosphates and ATP binding. The type of nucleotide bound at the specificity site determines substrate preference. It seems probable that ATP makes the enzyme reduce CDP and UDP, dGTP favors ADP reduction and dTTP favors GDP reduction. Provides the precursors necessary for DNA synthesis. Catalyzes the biosynthesis of deoxyribonucleotides from the corresponding ribonucleotides. This is Ribonucleoside-diphosphate reductase subunit alpha from Bacillus subtilis (strain 168).